We begin with the raw amino-acid sequence, 104 residues long: Large ribosomal subunit protein bL21 (104 aa).

Belongs to the bacterial ribosomal protein bL21 family. As to quaternary structure, part of the 50S ribosomal subunit. Contacts protein L20.

Functionally, this protein binds to 23S rRNA in the presence of protein L20. The sequence is that of Large ribosomal subunit protein bL21 from Moorella thermoacetica (strain ATCC 39073 / JCM 9320).